Consider the following 383-residue polypeptide: Protein COS5 (383 aa).

Over 1-42 (MKENELKNEKSVDVLSFKQLESQKIVLPQDLFRSSFTWFCYE) the chain is Cytoplasmic. A helical transmembrane segment spans residues 43 to 63 (IYKSLAFPIWMLLWLPLSVWW). The Extracellular segment spans residues 64–72 (KLSNNCIYP). Residues 73–93 (LIVSLLVLFLGPIFVLVICGL) form a helical membrane-spanning segment. Residues 94–232 (SRKRSLSKQL…RSKLTWFLKR (139 aa)) lie on the Cytoplasmic side of the membrane. The helical transmembrane segment at 233–253 (IFTIYSLPLWLAFLNCICVSQ) threads the bilayer. Position 254 (histidine 254) is a topological domain, extracellular. The chain crosses the membrane as a helical span at residues 255–275 (FCLAFRILCPGLFFLMMVWLF). Residues 276 to 383 (QNMRTTALLV…SRNEESLMKK (108 aa)) are Cytoplasmic-facing.

This sequence belongs to the DUP/COS family.

It localises to the membrane. This Saccharomyces cerevisiae (strain ATCC 204508 / S288c) (Baker's yeast) protein is Protein COS5 (COS5).